We begin with the raw amino-acid sequence, 931 residues long: Beta-mannosidase A (931 aa).

A signal peptide spans 1 to 21; that stretch reads MRHSIGLAAALLAPTLPVALG. N-linked (GlcNAc...) asparagine glycans are attached at residues Asn40, Asn79, Asn247, Asn282, and Asn347. Glu479 serves as the catalytic Proton donor. N-linked (GlcNAc...) asparagine glycans are attached at residues Asn550, Asn608, Asn658, Asn738, Asn790, Asn798, Asn830, and Asn918.

The protein belongs to the glycosyl hydrolase 2 family. Beta-mannosidase A subfamily. In terms of assembly, homodimer. N-glycosylated.

The protein resides in the secreted. It carries out the reaction Hydrolysis of terminal, non-reducing beta-D-mannose residues in beta-D-mannosides.. Its pathway is glycan metabolism; N-glycan degradation. Its function is as follows. Exoglycosidase that cleaves the single beta-linked mannose residue from the non-reducing end of beta-mannosidic oligosaccharides of various complexity and length. Involved in the degradation of polymeric mannan and galactomannan. Releases the terminal mannose residue from mannobiose and mannotriose, as well as from galactosyl-mannobiose (GM2), galactosyl-mannotriose (GM3) and di-galactosyl-mannopentaose (G2M5). This is Beta-mannosidase A (mndA) from Aspergillus niger.